Here is an 891-residue protein sequence, read N- to C-terminus: DNA polymerase I (891 aa).

Residues 1 to 313 form the 5'-3' exonuclease domain; the sequence is MEQPVIKEGT…LLDNTPALDN (313 aa). The 3'-5' exonuclease domain maps to 314–488; that stretch reads TPKKSCMIVL…RLCEYFEKGG (175 aa). The segment at 492–890 is polymerase; it reads NLLSLAREIE…FIAKRWNELK (399 aa).

This sequence belongs to the DNA polymerase type-A family. Single-chain monomer with multiple functions.

It catalyses the reaction DNA(n) + a 2'-deoxyribonucleoside 5'-triphosphate = DNA(n+1) + diphosphate. In addition to polymerase activity, this DNA polymerase exhibits 3'-5' and 5'-3' exonuclease activity. The chain is DNA polymerase I (polA) from Helicobacter pylori (strain ATCC 700392 / 26695) (Campylobacter pylori).